The primary structure comprises 174 residues: MLDREGYRPNVGIILTNNRDEVFWGKRVREHSWQFPQGGIKPGESPETAMYRELYEEVGLLSQHVKIVGRTRDWLRYDVPNNWVRREWRGSYRGQKQIWYLLRLTGRDCDVNLRATRHPEFDGWRWHQYWAPVDEVIDFKRDVYLGALKELSSRFLRGMESYEDFAARQLSGNR.

The 144-residue stretch at 6–149 (GYRPNVGIIL…KRDVYLGALK (144 aa)) folds into the Nudix hydrolase domain. The Nudix box motif lies at 38–59 (GGIKPGESPETAMYRELYEEVG).

Belongs to the Nudix hydrolase family. RppH subfamily. Requires a divalent metal cation as cofactor.

Accelerates the degradation of transcripts by removing pyrophosphate from the 5'-end of triphosphorylated RNA, leading to a more labile monophosphorylated state that can stimulate subsequent ribonuclease cleavage. In Neisseria meningitidis serogroup C / serotype 2a (strain ATCC 700532 / DSM 15464 / FAM18), this protein is RNA pyrophosphohydrolase.